The primary structure comprises 833 residues: Multiphosphoryl transfer protein 2 (833 aa).

The 90-residue stretch at 2-91 (ALIVEFICEL…QWLRDEFPHC (90 aa)) folds into the HPr domain. His-16 functions as the Tele-phosphohistidine intermediate; for HPr activity in the catalytic mechanism. Residue His-16 is modified to Phosphohistidine; by EI. A PTS EI region spans residues 143-653 (LGNLPAAKGV…AAKARMAQLD (511 aa)). His-301 (tele-phosphohistidine intermediate; for PTS EI activity) is an active-site residue. Residue His-301 is modified to Phosphohistidine; by autocatalysis. The phosphoenolpyruvate site is built by Arg-408 and Arg-444. Mg(2+) contacts are provided by Glu-543 and Asp-567. Phosphoenolpyruvate is bound by residues 566-567 (ND) and Arg-577. The active-site Proton donor; for EI activity is Cys-614. The PTS EIIA type-2 domain occupies 688-830 (PLVTAECITL…DAIASLLQHE (143 aa)). His-750 functions as the Tele-phosphohistidine intermediate; for PTS EIIA activity in the catalytic mechanism. His-750 carries the phosphohistidine; by HPr modification.

The protein belongs to the PEP-utilizing enzyme family. Mg(2+) serves as cofactor.

The protein localises to the cytoplasm. It carries out the reaction L-histidyl-[protein] + phosphoenolpyruvate = N(pros)-phospho-L-histidyl-[protein] + pyruvate. The enzyme catalyses D-fructose(out) + N(pros)-phospho-L-histidyl-[protein] = D-fructose 1-phosphate(in) + L-histidyl-[protein]. Multifunctional protein that includes general (non sugar-specific) and sugar-specific components of the phosphoenolpyruvate-dependent sugar phosphotransferase system (sugar PTS). This major carbohydrate active transport system catalyzes the phosphorylation of incoming sugar substrates concomitantly with their translocation across the cell membrane. The enzyme II FrwABC PTS system is involved in fructose transport. The chain is Multiphosphoryl transfer protein 2 from Escherichia coli (strain K12).